The primary structure comprises 80 residues: Probable antimicrobial peptide clone Con10 (80 aa).

Positions 1 to 24 are cleaved as a signal peptide; the sequence is MQYKTKTFLVIFLAYLVVTNEAEA. The propeptide occupies 56-80; sequence EIEDFFDPYQRELDLELERLLSQLQ.

Belongs to the non-disulfide-bridged peptide (NDBP) superfamily. Medium-length antimicrobial peptide (group 3) family. As to expression, expressed by the venom gland.

It localises to the secreted. It is found in the target cell membrane. Antimicrobial peptide. Has antifungal activity against all strains tested (MIC=12.5-200 uM). May act by disrupting the integrity of the bacterial cell membrane. This Opisthacanthus cayaporum (South American scorpion) protein is Probable antimicrobial peptide clone Con10.